A 37-amino-acid polypeptide reads, in one-letter code: Kappa-actitoxin-Bgr1a (37 aa).

One can recognise a ShKT domain in the interval 2-37 (CRDWFKETACRHAKSLGNCRTSQKYRANCAKTCELC). Intrachain disulfides connect Cys-2–Cys-37, Cys-11–Cys-30, and Cys-20–Cys-34. The crucial for binding to potassium channels stretch occupies residues 25–26 (KY).

The protein belongs to the sea anemone type 1 potassium channel toxin family. Type 1b subfamily.

It is found in the secreted. The protein resides in the nematocyst. Functionally, inhibits voltage-dependent potassium channels of the Kv1 family (Kv1.1/KCNA1 (Kd=6 nM), Kv1.2/KCNA2 (Kd=15 nM), Kv1.3/KCNA3 (Kd=10-39 nM), Kv1.6/KCNA6, and KCa3.1/KCNN4 (Kd=172 nM)). This chain is Kappa-actitoxin-Bgr1a, found in Bunodosoma granuliferum (Red warty sea anemone).